A 163-amino-acid chain; its full sequence is Lipoprotein signal peptidase (163 aa).

Transmembrane regions (helical) follow at residues 9 to 29, 42 to 62, 67 to 87, and 93 to 113; these read AWPWLWFSVLVILLDQLSKYL, ILPFLNFTLNYNTGAAFSFLG, WQIIFFAAISFVVSIFLILWL, and SEIMMSLGLSLIIGGALGNFI. Active-site residues include D123 and D141. Residues 137–157 form a helical membrane-spanning segment; the sequence is FNVADSAICVGVFLLIVHMLL.

It belongs to the peptidase A8 family.

It localises to the cell inner membrane. The catalysed reaction is Release of signal peptides from bacterial membrane prolipoproteins. Hydrolyzes -Xaa-Yaa-Zaa-|-(S,diacylglyceryl)Cys-, in which Xaa is hydrophobic (preferably Leu), and Yaa (Ala or Ser) and Zaa (Gly or Ala) have small, neutral side chains.. Its pathway is protein modification; lipoprotein biosynthesis (signal peptide cleavage). In terms of biological role, this protein specifically catalyzes the removal of signal peptides from prolipoproteins. This is Lipoprotein signal peptidase from Coxiella burnetii (strain RSA 331 / Henzerling II).